Consider the following 662-residue polypeptide: Biosynthetic arginine decarboxylase (662 aa).

K126 is modified (N6-(pyridoxal phosphate)lysine). Position 308 to 318 (308 to 318 (LNVGGGLGVDY)) interacts with substrate.

The protein belongs to the Orn/Lys/Arg decarboxylase class-II family. SpeA subfamily. Requires Mg(2+) as cofactor. The cofactor is pyridoxal 5'-phosphate.

The catalysed reaction is L-arginine + H(+) = agmatine + CO2. Its function is as follows. Catalyzes the biosynthesis of agmatine from arginine. The protein is Biosynthetic arginine decarboxylase of Deinococcus radiodurans (strain ATCC 13939 / DSM 20539 / JCM 16871 / CCUG 27074 / LMG 4051 / NBRC 15346 / NCIMB 9279 / VKM B-1422 / R1).